Here is a 278-residue protein sequence, read N- to C-terminus: 2-heptyl-3-hydroxy-4-quinolone dioxygenase AqdC1 (278 aa).

One can recognise an AB hydrolase-1 domain in the interval 29–158; the sequence is PTIVMLPGWC…GWVDSCRALF (130 aa). His-103 provides a ligand contact to substrate. His-250 (proton donor/acceptor) is an active-site residue.

It belongs to the AB hydrolase superfamily.

The enzyme catalyses 2-heptyl-3-hydroxy-4(1H)-quinolone + O2 = N-octanoylanthranilate + CO + H(+). Its function is as follows. Involved in the degradation of the Pseudomonas aeruginosa quorum sensing signal molecules HHQ (2-heptyl-4-quinolone) and PQS (2-heptyl-3-hydroxy-4-quinolone) to anthranilic acid. Catalyzes the cleavage of PQS to form N-octanoylanthranilic acid and carbon monoxide. The polypeptide is 2-heptyl-3-hydroxy-4-quinolone dioxygenase AqdC1 (Rhodococcus erythropolis (Arthrobacter picolinophilus)).